Here is a 166-residue protein sequence, read N- to C-terminus: Peptidyl-prolyl cis-trans isomerase-like 1 (166 aa).

In terms of domain architecture, PPIase cyclophilin-type spans 10 to 164; that stretch reads QPPNVYLETS…DDVKIIKAYP (155 aa). Cyclosporin A contacts are provided by residues 54-65, 70-71, 99-104, 109-113, Thr-119, and Lys-125; these read HRIIKDFMIQGG, TG, AMANAG, and GSQFF. At Ser-149 the chain carries Phosphoserine.

The protein belongs to the cyclophilin-type PPIase family. PPIL1 subfamily. As to quaternary structure, identified in the spliceosome C complex. Interacts with SNW1/SKIP. Interacts with CDC40/PRP17; this interaction leads to CDC40 isomerization. Interacts with RBM22.

The protein resides in the nucleus. The catalysed reaction is [protein]-peptidylproline (omega=180) = [protein]-peptidylproline (omega=0). Its activity is regulated as follows. Inhibited by Cyclosporin A. Functionally, involved in pre-mRNA splicing as component of the spliceosome. PPIases accelerate the folding of proteins. It catalyzes the cis-trans isomerization of proline imidic peptide bonds in oligopeptides. Catalyzes prolyl peptide bond isomerization in CDC40/PRP17. Plays an important role in embryonic brain development; this function is independent of its isomerase activity. The polypeptide is Peptidyl-prolyl cis-trans isomerase-like 1 (PPIL1) (Bos taurus (Bovine)).